Consider the following 273-residue polypeptide: 4-hydroxy-tetrahydrodipicolinate reductase (273 aa).

Residues 12-17 and glutamate 38 contribute to the NAD(+) site; that span reads GAGGRM. Residue arginine 39 participates in NADP(+) binding. Residues 102–104 and 126–129 each bind NAD(+); these read GTT and AANF. The active-site Proton donor/acceptor is histidine 159. Histidine 160 provides a ligand contact to (S)-2,3,4,5-tetrahydrodipicolinate. Lysine 163 serves as the catalytic Proton donor. 169–170 contacts (S)-2,3,4,5-tetrahydrodipicolinate; it reads GT.

It belongs to the DapB family. As to quaternary structure, homotetramer.

It localises to the cytoplasm. It carries out the reaction (S)-2,3,4,5-tetrahydrodipicolinate + NAD(+) + H2O = (2S,4S)-4-hydroxy-2,3,4,5-tetrahydrodipicolinate + NADH + H(+). It catalyses the reaction (S)-2,3,4,5-tetrahydrodipicolinate + NADP(+) + H2O = (2S,4S)-4-hydroxy-2,3,4,5-tetrahydrodipicolinate + NADPH + H(+). It functions in the pathway amino-acid biosynthesis; L-lysine biosynthesis via DAP pathway; (S)-tetrahydrodipicolinate from L-aspartate: step 4/4. In terms of biological role, catalyzes the conversion of 4-hydroxy-tetrahydrodipicolinate (HTPA) to tetrahydrodipicolinate. In Enterobacter sp. (strain 638), this protein is 4-hydroxy-tetrahydrodipicolinate reductase.